The primary structure comprises 263 residues: 3'-5' ssDNA/RNA exonuclease TatD (263 aa).

A divalent metal cation-binding residues include E91, H127, and H152.

This sequence belongs to the metallo-dependent hydrolases superfamily. TatD-type hydrolase family. TatD subfamily. Monomer. Mg(2+) is required as a cofactor.

Its subcellular location is the cytoplasm. Functionally, 3'-5' exonuclease that prefers single-stranded DNA and RNA. May play a role in the H(2)O(2)-induced DNA damage repair. The protein is 3'-5' ssDNA/RNA exonuclease TatD of Cronobacter sakazakii (strain ATCC BAA-894) (Enterobacter sakazakii).